A 158-amino-acid chain; its full sequence is Acireductone dioxygenase (158 aa).

Fe(2+)-binding residues include His-81, His-83, Glu-87, and His-126. Residues His-81, His-83, Glu-87, and His-126 each coordinate Ni(2+).

The protein belongs to the acireductone dioxygenase (ARD) family. Fe(2+) serves as cofactor. The cofactor is Ni(2+).

It localises to the cytoplasm. It is found in the nucleus. It carries out the reaction 1,2-dihydroxy-5-(methylsulfanyl)pent-1-en-3-one + O2 = 4-methylsulfanyl-2-oxobutanoate + formate + 2 H(+). The catalysed reaction is 1,2-dihydroxy-5-(methylsulfanyl)pent-1-en-3-one + O2 = 3-(methylsulfanyl)propanoate + CO + formate + 2 H(+). It functions in the pathway amino-acid biosynthesis; L-methionine biosynthesis via salvage pathway; L-methionine from S-methyl-5-thio-alpha-D-ribose 1-phosphate: step 5/6. Catalyzes 2 different reactions between oxygen and the acireductone 1,2-dihydroxy-3-keto-5-methylthiopentene (DHK-MTPene) depending upon the metal bound in the active site. Fe-containing acireductone dioxygenase (Fe-ARD) produces formate and 2-keto-4-methylthiobutyrate (KMTB), the alpha-ketoacid precursor of methionine in the methionine recycle pathway. Ni-containing acireductone dioxygenase (Ni-ARD) produces methylthiopropionate, carbon monoxide and formate, and does not lie on the methionine recycle pathway. The sequence is that of Acireductone dioxygenase from Metarhizium robertsii (strain ARSEF 23 / ATCC MYA-3075) (Metarhizium anisopliae (strain ARSEF 23)).